Consider the following 69-residue polypeptide: NAD(P)H-quinone oxidoreductase subunit L (69 aa).

2 helical membrane passes run 5–25 (LILL…ITYF) and 40–60 (GFMY…SPFL).

It belongs to the complex I NdhL subunit family. As to quaternary structure, NDH-1 can be composed of about 15 different subunits; different subcomplexes with different compositions have been identified which probably have different functions.

It is found in the cellular thylakoid membrane. The enzyme catalyses a plastoquinone + NADH + (n+1) H(+)(in) = a plastoquinol + NAD(+) + n H(+)(out). It catalyses the reaction a plastoquinone + NADPH + (n+1) H(+)(in) = a plastoquinol + NADP(+) + n H(+)(out). Functionally, NDH-1 shuttles electrons from an unknown electron donor, via FMN and iron-sulfur (Fe-S) centers, to quinones in the respiratory and/or the photosynthetic chain. The immediate electron acceptor for the enzyme in this species is believed to be plastoquinone. Couples the redox reaction to proton translocation, and thus conserves the redox energy in a proton gradient. Cyanobacterial NDH-1 also plays a role in inorganic carbon-concentration. The polypeptide is NAD(P)H-quinone oxidoreductase subunit L (Acaryochloris marina (strain MBIC 11017)).